The following is a 390-amino-acid chain: MGQRLSGGRSCLDVPGRFLPQPPPPPPPVRRKLALLFAMLCIWLYMFLYSCAGSCTAAPGLLLLGSGSRATHAQPALVTAPNETSPKMPFRAPPANSLAAGKDKTVGAGSQEEQSPEAPDSPSPISSFFSGAGSKQLPQAIIIGVKKGGTRALLEFLRVHPDVRAVGAEPHFFDRSYHKGLAWYRDLMPRTLKGQITMEKTPSYFVTREAPARISAMSKDTKLIVVVRDPVTRAISDYTQTLSKRPDIPSFESLTFRNRSAGLIDTSWSAIQIGLYAKHLEPWLRHFPLGQMLFVSGERLVSDPAGELRRVQDFLGLKRIITDKHFYFNQTKGFPCLKKAEGSGKPHCLGKTKGRAHPTIAREVLRQLRDFYRPFNRKFYQMTGRDFGWD.

Residues 1 to 25 (MGQRLSGGRSCLDVPGRFLPQPPPP) form a disordered region. At 1-32 (MGQRLSGGRSCLDVPGRFLPQPPPPPPPVRRK) the chain is on the cytoplasmic side. A helical; Signal-anchor for type II membrane protein transmembrane segment spans residues 33-53 (LALLFAMLCIWLYMFLYSCAG). The Lumenal portion of the chain corresponds to 54-390 (SCTAAPGLLL…QMTGRDFGWD (337 aa)). The disordered stretch occupies residues 79 to 125 (TAPNETSPKMPFRAPPANSLAAGKDKTVGAGSQEEQSPEAPDSPSPI). Asparagine 82 carries N-linked (GlcNAc...) asparagine glycosylation. 147–151 (KGGTR) contacts 3'-phosphoadenylyl sulfate. Substrate is bound by residues 169-175 (EPHFFDR) and 200-203 (KTPS). Residues arginine 228 and serine 236 each contribute to the 3'-phosphoadenylyl sulfate site. A glycan (N-linked (GlcNAc...) asparagine) is linked at asparagine 258. 268–269 (WS) contacts substrate. Asparagine 329 carries N-linked (GlcNAc...) asparagine glycosylation. The cysteines at positions 336 and 348 are disulfide-linked. 353-357 (KGRAH) is a binding site for 3'-phosphoadenylyl sulfate.

It belongs to the sulfotransferase 1 family.

It is found in the golgi apparatus membrane. The catalysed reaction is alpha-D-glucosaminyl-[heparan sulfate](n) + 3'-phosphoadenylyl sulfate = 3-sulfo-alpha-D-glucosaminyl-[heparan sulfate](n) + adenosine 3',5'-bisphosphate + H(+). In terms of biological role, sulfotransferase that utilizes 3'-phospho-5'-adenylyl sulfate (PAPS) to catalyze the transfer of a sulfo group to an N-unsubstituted glucosamine linked to a 2-O-sulfo iduronic acid unit on heparan sulfate. Catalyzes the O-sulfation of glucosamine in IdoUA2S-GlcNS and also in IdoUA2S-GlcNH2. Unlike HS3ST1/3-OST-1, does not convert non-anticoagulant heparan sulfate to anticoagulant heparan sulfate. This chain is Heparan sulfate glucosamine 3-O-sulfotransferase 3B1 (Hs3st3b1), found in Mus musculus (Mouse).